We begin with the raw amino-acid sequence, 303 residues long: DnaJ homolog subfamily C member 17 (303 aa).

Residues 11–76 (DLYALLGIEE…AARAAYDKVR (66 aa)) enclose the J domain. Disordered stretches follow at residues 104–123 (ERQA…SATT) and 150–170 (IRQD…GKGT). S112 is modified (phosphoserine). Basic and acidic residues predominate over residues 150-166 (IRQDREQRLRGRTENTE). Positions 178 to 249 (KCKKEDESQG…NPLKVSWLEG (72 aa)) constitute an RRM domain. Residue K264 is modified to N6-methyllysine.

As to expression, expressed in the thyroid gland.

The protein localises to the cytoplasm. It is found in the nucleus. May negatively affect PAX8-induced thyroglobulin/TG transcription. The protein is DnaJ homolog subfamily C member 17 (Dnajc17) of Mus musculus (Mouse).